The chain runs to 266 residues: Gap junction beta-4 protein (266 aa).

An intramembrane segment occupies 2-13 (NWAFLQGLLSGV). Topologically, residues 14 to 20 (NKYSTVL) are cytoplasmic. A helical transmembrane segment spans residues 21–40 (SRIWLSVVFIFRVLVYVVAA). The Extracellular segment spans residues 41–73 (EEVWDDEQKDFVCNTKQPGCPNVCYDEFFPVSH). Disulfide bonds link Cys-53-Cys-175, Cys-60-Cys-169, and Cys-64-Cys-164. A helical membrane pass occupies residues 74–94 (VRLWALQLILVTCPSLLVVMH). Over 95–130 (VAYREERERKHHLKHGPNAPSLYDNLSKKRGGLWWT) the chain is Cytoplasmic. Residues 131 to 151 (YLLSLIFKAAVDAGFLYIFHR) form a helical membrane-spanning segment. Topologically, residues 152–184 (LYKDYDMPRVVACSVEPCPHTVDCYISRPTEKK) are extracellular. Residues 185–205 (VFTYFMVTTAAICILLNLSEV) traverse the membrane as a helical segment. Over 206 to 266 (FYLVGKRCME…SAPVDAGGYP (61 aa)) the chain is Cytoplasmic.

It belongs to the connexin family. Beta-type (group I) subfamily. A hemichannel or connexon is composed of a hexamer of connexins. A functional gap junction is formed by the apposition of two hemichannels. Forms heteromeric channels with GJB2.

The protein localises to the cell membrane. It localises to the cell junction. It is found in the gap junction. Functionally, structural component of gap junctions. Gap junctions are dodecameric channels that connect the cytoplasm of adjoining cells. They are formed by the docking of two hexameric hemichannels, one from each cell membrane. Small molecules and ions diffuse from one cell to a neighboring cell via the central pore. This chain is Gap junction beta-4 protein (GJB4), found in Homo sapiens (Human).